Consider the following 554-residue polypeptide: Asparagine synthetase B [glutamine-hydrolyzing] (554 aa).

C2 functions as the For GATase activity in the catalytic mechanism. In terms of domain architecture, Glutamine amidotransferase type-2 spans 2-186 (CSIFGVFDIK…AGSYLWSQDG (185 aa)). Residues 50 to 54 (RLSIV), 75 to 77 (NGE), and D99 each bind L-glutamine. ATP is bound by residues L233, V273, and 347-348 (SG).

The protein belongs to the asparagine synthetase family. As to quaternary structure, homodimer.

The enzyme catalyses L-aspartate + L-glutamine + ATP + H2O = L-asparagine + L-glutamate + AMP + diphosphate + H(+). Its pathway is amino-acid biosynthesis; L-asparagine biosynthesis; L-asparagine from L-aspartate (L-Gln route): step 1/1. Its activity is regulated as follows. Glutamine-dependent asparagine synthesis activity can be inhibited by aspartic acid analogs (such as a sulfinate derivative and (2S,3R)-2-amino-3-methylsuccinate) in vitro; the inhibition is competitive with respect to aspartate. In terms of biological role, catalyzes the ATP-dependent conversion of aspartate into asparagine, using glutamine as a source of nitrogen. Can also use ammonia as the nitrogen source in vitro, albeit with lower efficiency. As nucleotide substrates, ATP and dATP are utilized at a similar rate in both the glutamine- and ammonia-dependent reactions, whereas GTP utilization is only 15% that of ATP, and CTP, UTP, ITP and XTP are very poor or not substrates. Also exhibits glutaminase activity. The sequence is that of Asparagine synthetase B [glutamine-hydrolyzing] (asnB) from Escherichia coli (strain K12).